Consider the following 226-residue polypeptide: HTH-type transcriptional regulator TcmR (226 aa).

The segment covering 1–16 (MDSAETDTPSTRSTPN) has biased composition (polar residues). The segment at 1 to 25 (MDSAETDTPSTRSTPNGPGLRQRKL) is disordered. Positions 26–86 (RRTRDQLIRE…TPISAIDEAF (61 aa)) constitute an HTH tetR-type domain. Residues 49–68 (TVEQIAEAVEVHPRTFFRHF) constitute a DNA-binding region (H-T-H motif).

It functions in the pathway antibiotic biosynthesis; tetracenomycin C biosynthesis. Functionally, represses transcription of the divergently oriented tcmR and tcmA (tetracenomycin C resistance and export) genes by binding to an intergenic operator region. This binding is inhibited by tetracenomycin C. The protein is HTH-type transcriptional regulator TcmR (tcmR) of Streptomyces glaucescens.